We begin with the raw amino-acid sequence, 507 residues long: Phosphoprotein (507 aa).

The tract at residues 1–48 is interaction with N0; it reads MAEEQARHVKNGLECIRALKAEPIGSLAIEEAMAAWSEISDNPGQERA. 5 disordered regions span residues 40-100, 134-163, 201-232, 250-273, and 285-309; these read SDNP…PRNL, GLDG…TEGY, NNFP…KKGT, GATQ…GNVP, and WTPE…HYDD. Residue S86 is modified to Phosphoserine. A compositionally biased stretch (low complexity) spans 134-145; that stretch reads GLDGDSTLSGGD. Over residues 146–160 the composition is skewed to acidic residues; it reads NESENSDVDIGEPDT. Position 151 is a phosphoserine (S151). Positions 260–270 are enriched in low complexity; it reads SEPSGPGAPAG. The segment covering 286–301 has biased composition (polar residues); the sequence is TPESGTTISPRSQNNE. A multimerization region spans residues 304–376; it reads GDHYDDELFS…LSSIMIAIPG (73 aa). Residue D314 coordinates Ca(2+). 2 interaction with the L polymerase regions span residues 361 to 377 and 396 to 410; these read STLE…IPGL and PIIG…AEVL. The segment at 457 to 507 is x domain (XD); sequence GPASRSVIRSIIKSSRLEEDRKRYLMTLLDDIKGANDLAKFHQMLMKIIMK. Residues 459-507 form an interaction with the nucleocapsid (N-RNA) region; that stretch reads ASRSVIRSIIKSSRLEEDRKRYLMTLLDDIKGANDLAKFHQMLMKIIMK.

It belongs to the morbillivirus P protein family. In terms of assembly, homotetramer. Interacts (via multimerization domain and XD domain) with polymerase L; this interaction forms the polymerase L-P complex. Interacts (via N-terminus) with N0 (via Ncore); this interaction allows P to chaperon N0 to avoid N polymerization and non-specific RNA binding before encapsidation. Interacts (via C-terminus) with N-RNA template (via Ntail); this interaction maintains the P/L complex anchored to the nucleocapsid template during the sequential transcription. Interacts (via C-terminus) with protein C this interaction allows C to associate with the ribonucleocapsid. Phosphorylation on serines by host CK2 is necessary for the formation of viral factories.

In terms of biological role, essential cofactor of the RNA polymerase L that plays a central role in the transcription and replication by forming the polymerase complex with RNA polymerase L and recruiting L to the genomic N-RNA template for RNA synthesis. Also plays a central role in the encapsidation of nascent RNA chains by forming the encapsidation complex with the nucleocapsid protein N (N-P complex). Acts as a chaperone for newly synthesized free N protein, so-called N0, allowing encapsidation of nascent RNA chains during replication. The nucleoprotein protein N prevents excessive phosphorylation of P, which leads to down-regulation of viral transcription/ replication. Participates, together with N, in the formation of viral factories (viroplasms), which are large inclusions in the host cytoplasm where replication takes place. In Measles virus (strain Edmonston B) (MeV), this protein is Phosphoprotein (P/V).